The following is a 1082-amino-acid chain: Putative white-brown complex homolog protein 30 (1082 aa).

2 helical membrane passes run 12–32 (HIFL…SLDG) and 292–312 (NIHA…IMVY). Residues 329–348 (SREAAARHAKETTQARERWK) are compositionally biased toward basic and acidic residues. The interval 329–437 (SREAAARHAK…QAPKGKQLHT (109 aa)) is disordered. The ABC transporter domain maps to 484–726 (VAFKDLTLTL…FADIGITVPD (243 aa)). 518-525 (GPSGAGKT) lines the ATP pocket. In terms of domain architecture, ABC transmembrane type-2 spans 832–1029 (RQYRYFVGRV…TLEAFVLSNA (198 aa)). A run of 5 helical transmembrane segments spans residues 853 to 873 (ALDF…AKVN), 877 to 897 (IDTL…KISA), 958 to 978 (YIVL…FAIL), 979 to 999 (YSPS…TLIA), and 1054 to 1074 (WILC…IAYF).

It belongs to the ABC transporter superfamily. ABCG family. Eye pigment precursor importer (TC 3.A.1.204) subfamily.

It localises to the membrane. This is Putative white-brown complex homolog protein 30 (WBC30) from Arabidopsis thaliana (Mouse-ear cress).